Consider the following 2061-residue polypeptide: Myoferlin (2061 aa).

One can recognise a C2 1 domain in the interval 1–101; the sequence is MLRVIVESAS…TGDQSRSLPY (101 aa). At 1–2025 the chain is on the cytoplasmic side; that stretch reads MLRVIVESAS…MKFIVWRRFK (2025 aa). The interval 123 to 172 is disordered; the sequence is GYDPPSAPHPNDLSGPSVPGMGGDGEEDEGDEDRLDNAVRGPGPKGPVGT. Over residues 146–156 the composition is skewed to acidic residues; the sequence is DGEEDEGDEDR. At Ser174 the chain carries Phosphoserine. C2 domains lie at 181–300 and 339–474; these read RLTK…RKWL and DSDD…VEDF. Residues 186-281 are necessary for interaction with EHD2; that stretch reads KNSRRMLSNK…RADCLMGEFK (96 aa). The interval 323 to 342 is disordered; sequence LGTGDEPPPERRDRDNDSDD. Asp390, Asp396, Asp444, Asp446, and Asp452 together coordinate Ca(2+). Residue Lys553 is modified to N6-acetyllysine. A Phosphoserine modification is found at Ser729. Lys884 carries the post-translational modification N6-acetyllysine. The interval 938-967 is disordered; the sequence is ESRYPGGDWKPAEDTYTDANGDKAASPSEL. C2 domains follow at residues 1123-1251 and 1282-1410; these read GANT…LLWH and LPPQ…GKED. Positions 1155, 1161, 1217, and 1219 each coordinate Ca(2+). Lys1507 carries the N6-acetyllysine modification. C2 domains are found at residues 1536–1654 and 1772–1920; these read PAPP…SHCG and GPPG…EKCR. 7 residues coordinate Ca(2+): Asp1569, Asp1575, Asp1624, Asp1626, Asp1891, Ser1894, and Asp1897. A Phosphoserine modification is found at Ser1915. Residues 2026 to 2046 traverse the membrane as a helical segment; it reads WVIIGLLFLLILLLFVAVLLY. Residues 2047-2061 are Extracellular-facing; that stretch reads SLPNYLSMKIVKPNV.

The protein belongs to the ferlin family. In terms of assembly, interacts with DNM2 and KDR. Interacts with EHD1. Interacts with EHD2; the interaction is direct. Interacts with RIPOR2. Ca(2+) serves as cofactor. As to expression, expressed in myoblast and endothelial cells (at protein level). Highly expressed in cardiac and skeletal muscles. Also present in lung, and at very low levels in kidney, placenta and brain.

The protein resides in the cell membrane. The protein localises to the nucleus membrane. It is found in the cytoplasmic vesicle membrane. In terms of biological role, calcium/phospholipid-binding protein that plays a role in the plasmalemma repair mechanism of endothelial cells that permits rapid resealing of membranes disrupted by mechanical stress. Involved in endocytic recycling. Implicated in VEGF signal transduction by regulating the levels of the receptor KDR. The polypeptide is Myoferlin (MYOF) (Homo sapiens (Human)).